The primary structure comprises 913 residues: Eukaryotic translation initiation factor 3 subunit C (913 aa).

The tract at residues 1 to 44 (MSRFFTTGSDSESESSLSGEELVTKPVGGNYGKQPLLLSEDEED) is disordered. Over residues 8 to 21 (GSDSESESSLSGEE) the composition is skewed to low complexity. Phosphoserine is present on residues S9, S11, S13, S15, S16, S18, and S39. An N6-acetyllysine modification is found at K99. 2 disordered regions span residues 157–301 (TSYK…GGEW) and 522–542 (QLTPPEGSSKSEQDQAENEGE). Residues S166, S178, S181, and S182 each carry the phosphoserine modification. Positions 166 to 190 (SADEDAEKNEEDSEGSSDEDEDEDG) are enriched in acidic residues. Residues 199–216 (KKSEAPSGESRKFLKKMD) are compositionally biased toward basic and acidic residues. Positions 217-232 (DEDEDSEDSEDDEDWD) are enriched in acidic residues. A compositionally biased stretch (basic and acidic residues) spans 261–278 (PTTDEDKKAAEKKREDKA). The segment covering 522–531 (QLTPPEGSSK) has biased composition (polar residues). At T524 the chain carries Phosphothreonine. Residue K643 is modified to N6-acetyllysine. The 177-residue stretch at 673–849 (FHLHINLELL…QTVVMHRTEP (177 aa)) folds into the PCI domain. The interval 885-913 (FRDQKDGYRKNEGYMRRGGYRQQQSQTAY) is disordered. Over residues 886-899 (RDQKDGYRKNEGYM) the composition is skewed to basic and acidic residues. S909 carries the phosphoserine modification.

Component of the eukaryotic translation initiation factor 3 (eIF-3) complex, which is composed of 13 subunits: EIF3A, EIF3B, EIF3C, EIF3D, EIF3E, EIF3F, EIF3G, EIF3H, EIF3I, EIF3J, EIF3K, EIF3L and EIF3M. The eIF-3 complex appears to include 3 stable modules: module A is composed of EIF3A, EIF3B, EIF3G and EIF3I; module B is composed of EIF3F, EIF3H, and EIF3M; and module C is composed of EIF3C, EIF3D, EIF3E, EIF3K and EIF3L. EIF3C of module C binds EIF3B of module A and EIF3H of module B, thereby linking the three modules. EIF3J is a labile subunit that binds to the eIF-3 complex via EIF3B. The eIF-3 complex interacts with RPS6KB1 under conditions of nutrient depletion. Mitogenic stimulation leads to binding and activation of a complex composed of MTOR and RPTOR, leading to phosphorylation and release of RPS6KB1 and binding of EIF4B to eIF-3. Identified in a HCV IRES-mediated translation complex, at least composed of EIF3C, IGF2BP1, RPS3 and HCV RNA-replicon. Interacts with ALKBH4, IFIT1 and IFIT2. Interacts with BZW2/5MP1. Phosphorylated. Phosphorylation is enhanced upon serum stimulation.

The protein localises to the cytoplasm. In terms of biological role, component of the eukaryotic translation initiation factor 3 (eIF-3) complex, which is required for several steps in the initiation of protein synthesis. The eIF-3 complex associates with the 40S ribosome and facilitates the recruitment of eIF-1, eIF-1A, eIF-2:GTP:methionyl-tRNAi and eIF-5 to form the 43S pre-initiation complex (43S PIC). The eIF-3 complex stimulates mRNA recruitment to the 43S PIC and scanning of the mRNA for AUG recognition. The eIF-3 complex is also required for disassembly and recycling of post-termination ribosomal complexes and subsequently prevents premature joining of the 40S and 60S ribosomal subunits prior to initiation. The eIF-3 complex specifically targets and initiates translation of a subset of mRNAs involved in cell proliferation, including cell cycling, differentiation and apoptosis, and uses different modes of RNA stem-loop binding to exert either translational activation or repression. This chain is Eukaryotic translation initiation factor 3 subunit C, found in Homo sapiens (Human).